A 532-amino-acid polypeptide reads, in one-letter code: Tyrosine-protein kinase Src-1 (532 aa).

The tract at residues 1 to 52 (MGATKSKPREGGPRSRSLDIVEGSHQPFTSLSASQTPNKSLDSHRPPAQPFG) is disordered. A lipid anchor (N-myristoyl glycine) is attached at glycine 2. The segment covering 7 to 19 (KPREGGPRSRSLD) has biased composition (basic and acidic residues). The segment covering 26–40 (QPFTSLSASQTPNKS) has biased composition (polar residues). An SH3 domain is found at 80 to 141 (GGVTTFVALY…PSNYVAPSDS (62 aa)). The SH2 domain maps to 147–244 (WYLGKITRRE…GLCHRLTTVC (98 aa)). The Protein kinase domain occupies 266 to 519 (LRLELKLGQG…YLQAFLEDYF (254 aa)). Residues 272-280 (LGQGCFGEV) and lysine 294 each bind ATP. Aspartate 385 serves as the catalytic Proton acceptor. Residue tyrosine 415 is modified to Phosphotyrosine; by autocatalysis.

It belongs to the protein kinase superfamily. Tyr protein kinase family. SRC subfamily.

The protein resides in the cell membrane. It catalyses the reaction L-tyrosyl-[protein] + ATP = O-phospho-L-tyrosyl-[protein] + ADP + H(+). This is Tyrosine-protein kinase Src-1 (src-a) from Xenopus laevis (African clawed frog).